The chain runs to 269 residues: Diaminopimelate epimerase (269 aa).

3 residues coordinate substrate: Asn15, Gln49, and Asn66. The active-site Proton donor is Cys75. Substrate-binding positions include 76–77, Asn155, Asn187, and 204–205; these read GN and ER. Cys213 functions as the Proton acceptor in the catalytic mechanism. Residue 214 to 215 participates in substrate binding; the sequence is GS.

This sequence belongs to the diaminopimelate epimerase family. In terms of assembly, homodimer.

It is found in the cytoplasm. It catalyses the reaction (2S,6S)-2,6-diaminopimelate = meso-2,6-diaminopimelate. Its pathway is amino-acid biosynthesis; L-lysine biosynthesis via DAP pathway; DL-2,6-diaminopimelate from LL-2,6-diaminopimelate: step 1/1. In terms of biological role, catalyzes the stereoinversion of LL-2,6-diaminopimelate (L,L-DAP) to meso-diaminopimelate (meso-DAP), a precursor of L-lysine and an essential component of the bacterial peptidoglycan. In Rickettsia bellii (strain OSU 85-389), this protein is Diaminopimelate epimerase.